The sequence spans 246 residues: Mast cell protease 2 (246 aa).

The signal sequence occupies residues 1 to 19; it reads MHRPPLPLVLLLLCCRAQA. Positions 20–21 are cleaved as a propeptide — activation peptide; that stretch reads GE. The 223-residue stretch at 22–244 folds into the Peptidase S1 domain; that stretch reads IIGGTESKPH…YRPWIDEVLK (223 aa). Cys-51 and Cys-67 form a disulfide bridge. Active-site charge relay system residues include His-66 and Asp-109. An N-linked (GlcNAc...) asparagine glycan is attached at Asn-120. Cystine bridges form between Cys-143–Cys-208 and Cys-174–Cys-187. Ser-202 functions as the Charge relay system in the catalytic mechanism.

This sequence belongs to the peptidase S1 family. Granzyme subfamily.

The protein localises to the secreted. It localises to the cytoplasmic granule. In terms of biological role, putative mast cell chymase. This is Mast cell protease 2 from Ovis aries (Sheep).